The primary structure comprises 121 residues: Putative membrane protein insertion efficiency factor (121 aa).

The tract at residues 97 to 121 is disordered; the sequence is VPARRDRHAGGRRCCPANVDEQRST.

Belongs to the UPF0161 family.

The protein localises to the cell membrane. Could be involved in insertion of integral membrane proteins into the membrane. This is Putative membrane protein insertion efficiency factor from Rhodococcus jostii (strain RHA1).